A 69-amino-acid chain; its full sequence is Large ribosomal subunit protein bL31 (69 aa).

Zn(2+) is bound by residues C16, C18, C37, and C40.

It belongs to the bacterial ribosomal protein bL31 family. Type A subfamily. As to quaternary structure, part of the 50S ribosomal subunit. Zn(2+) serves as cofactor.

Its function is as follows. Binds the 23S rRNA. This Buchnera aphidicola subsp. Cinara cedri (strain Cc) protein is Large ribosomal subunit protein bL31.